Reading from the N-terminus, the 508-residue chain is Potassium/proton antiporter CemA (508 aa).

The next 5 helical transmembrane spans lie at 66–86, 282–302, 386–406, 433–453, and 468–488; these read LFIIYWSLLEYRISLCFLNLL, YQALASIQYIGCLIFLPWIIS, ILHLLTGMICFTTLGALFILG, ILLLTDLCIGFHSPHGWEVVI, and IISCFVSTFPVILDTVSKYWI.

This sequence belongs to the CemA family.

The protein resides in the plastid. It is found in the chloroplast inner membrane. It catalyses the reaction K(+)(in) + H(+)(out) = K(+)(out) + H(+)(in). In terms of biological role, contributes to K(+)/H(+) antiport activity by supporting proton efflux to control proton extrusion and homeostasis in chloroplasts in a light-dependent manner to modulate photosynthesis. Prevents excessive induction of non-photochemical quenching (NPQ) under continuous-light conditions. Indirectly promotes efficient inorganic carbon uptake into chloroplasts. The protein is Potassium/proton antiporter CemA of Anthoceros angustus (Hornwort).